Reading from the N-terminus, the 175-residue chain is uncharacterized protein (175 aa).

The first 23 residues, 1-23, serve as a signal peptide directing secretion; it reads MILVLLLILIAFLYIYFPSSLNQ.

This is an uncharacterized protein from Invertebrate iridescent virus 6 (IIV-6).